The chain runs to 318 residues: Small ribosomal subunit protein uS3 (318 aa).

Residues 17 to 86 (MDEYFAEQLS…NPQIDAQEVK (70 aa)) form the KH type-2 domain. The span at 198-229 (SVEVEEPAEKPAEKPAEKPAEKAAAPKKEAAK) shows a compositional bias: basic and acidic residues. The segment at 198-275 (SVEVEEPAEK…VQAETSEEIE (78 aa)) is disordered. A compositionally biased stretch (pro residues) spans 234-250 (APAPEAPAPAPEAPAPA). Over residues 253-275 (EEAEVAEPEEAEEVQAETSEEIE) the composition is skewed to acidic residues.

It belongs to the universal ribosomal protein uS3 family. As to quaternary structure, part of the 30S ribosomal subunit.

Binds the lower part of the 30S subunit head. The chain is Small ribosomal subunit protein uS3 from Methanosarcina acetivorans (strain ATCC 35395 / DSM 2834 / JCM 12185 / C2A).